The following is a 492-amino-acid chain: MYPFFTYSPGRHYFEYKWYNLELLRLIGSAPYGGCDAAEFLELVASLKPNDADEWHHKFLALAERTQAKGEQMSEAGHEAVARGAYLRASNYFRCAQYMFPIMPAARQGEFLKLYHRSIRSFEQAAELMEHRVERVSIPFQPPEYRAPAVELPGWLHLPAAHQRLSGRKTPLLICVGGADSTQEELYFLSAAEGPGLGYAILTFDGPGQGLTLRESGVPLRPDGEVVIEAVLDFIESYAAEHPEADLDVDAISITGQSLGGYLALRGAADPRIKACVAVDPIYDFYDLAMSRMPRWFMWPWERNYMGDGFVDFAVIEHSKLDVATKYTFAQGGQMFGSASPAQMIRDMKQYTFRLDKTITASKRHGNNRDYLEWVTCPVFVTGAAGDEKLFLPEMSTSAIMRNLANVPDEHKELWIPKEWSEGGAQAKSGAWPLLQHRCFKFLDEKLGISRGAKPVQLKTGFVKGVNGHGLTNGGLNGALNGATNGITNGVH.

The Nucleophile role is filled by S258.

This sequence belongs to the AB hydrolase superfamily. FUS2 hydrolase family. Homodimer.

Its pathway is mycotoxin biosynthesis. Functionally, alpha/beta hydrolase; part of the gene cluster that mediates the biosynthesis of UCS1025A, a member of the pyrrolizidinone family that acts as a strong telomerase inhibitor and displays potent antibacterial and antitumor properties. These compounds share a hemiaminal-containing pyrrolizidinone core fused with a gamma-lactone, giving a furopyrrolizidine that is connected to a decalin fragment. The polyketide synthase module (PKS) of the PKS-NRPS ucsA is responsible for the synthesis of the polyketide backbone via the condensation of an acetyl-CoA starter unit with 6 malonyl-CoA units. The downstream nonribosomal peptide synthetase (NRPS) module then amidates the carboxyl end of the polyketide with a 2S,3S-methylproline derived from L-isoleucine by the 2-oxoglutarate-dependent dioxygenase ucsF which converts L-isoleucine to (4S,5S)-4-methylpyrroline-5-carboxylate that is further converted to 2S,3S-methylproline by the pyrroline-5-carboxylate reductase ucsG. Reductive release of the completed aminoacyl polyketide from the assembly line can form the 3-pyrrolin-2-one structure via an intramolecular Knoevenagel reaction. Because ucsA lacks a designated enoylreductase (ER) domain, the required activity is provided the enoyl reductase ucsL. This keto acyclic precursor is the substrate of the Diels-Alderase ucsH, that catalyzes the Diels-Alder cycloaddition. Oxidation of the 3S-methyl group to a carboxylate by the cytochrome P450 monooxygenase ucsK allows an oxa-Michael cyclization that might involve the reductase/dehydrogenase ucsI and which furnishes the furopyrrolizidine. The oxidase ucsJ likely plays a critical role in stereoselective reduction of the C5-C6 double bond to afford the required R-configured carboxylate group. Further enolization and oxidation at C5 by an unidentified enzyme affords the last intermediate that can undergo oxa-Michael cyclization to yield UCS1025A. The chain is Alpha/beta hydrolase ucsC from Acremonium sp.